The following is a 497-amino-acid chain: Putative BTB/POZ domain-containing protein R738 (497 aa).

A BTB domain is found at 16-86 (SDCKLVLDDG…FYEKSNVINA (71 aa)).

It belongs to the mimivirus BTB/WD family.

This Acanthamoeba polyphaga (Amoeba) protein is Putative BTB/POZ domain-containing protein R738.